Here is a 358-residue protein sequence, read N- to C-terminus: Aromatic amino acid aminotransferase (358 aa).

At Lys214 the chain carries N6-(pyridoxal phosphate)lysine.

Belongs to the class-II pyridoxal-phosphate-dependent aminotransferase family. In terms of assembly, homodimer. Pyridoxal 5'-phosphate serves as cofactor.

The catalysed reaction is an aromatic L-alpha-amino acid + 2-oxoglutarate = an aromatic oxo-acid + L-glutamate. Its function is as follows. Aminotransferase that catalyzes the conversion of aromatic amino acids and 2-oxoglutarate into corresponding aromatic oxo acids and L-glutamate. The protein is Aromatic amino acid aminotransferase of Rhodococcus jostii (strain RHA1).